The primary structure comprises 343 residues: L-threonine 3-dehydrogenase (343 aa).

C40 serves as a coordination point for Zn(2+). Active-site charge relay system residues include T42 and H45. Positions 65, 66, 95, 98, 101, and 109 each coordinate Zn(2+). NAD(+) is bound by residues I177, D197, R202, 264–266 (LGI), and 288–289 (IY).

The protein belongs to the zinc-containing alcohol dehydrogenase family. In terms of assembly, homotetramer. Zn(2+) serves as cofactor.

Its subcellular location is the cytoplasm. The enzyme catalyses L-threonine + NAD(+) = (2S)-2-amino-3-oxobutanoate + NADH + H(+). It functions in the pathway amino-acid degradation; L-threonine degradation via oxydo-reductase pathway; glycine from L-threonine: step 1/2. Its function is as follows. Catalyzes the NAD(+)-dependent oxidation of L-threonine to 2-amino-3-ketobutyrate. The sequence is that of L-threonine 3-dehydrogenase from Aliivibrio fischeri (strain MJ11) (Vibrio fischeri).